A 350-amino-acid polypeptide reads, in one-letter code: Beta-hexosaminidase (350 aa).

Substrate is bound by residues Asp-62, Arg-70, Arg-133, and 163–164 (KH). The active-site Proton donor/acceptor is His-176. The active-site Nucleophile is the Asp-248.

Belongs to the glycosyl hydrolase 3 family. NagZ subfamily.

It is found in the cytoplasm. It catalyses the reaction Hydrolysis of terminal non-reducing N-acetyl-D-hexosamine residues in N-acetyl-beta-D-hexosaminides.. Its pathway is cell wall biogenesis; peptidoglycan recycling. Plays a role in peptidoglycan recycling by cleaving the terminal beta-1,4-linked N-acetylglucosamine (GlcNAc) from peptide-linked peptidoglycan fragments, giving rise to free GlcNAc, anhydro-N-acetylmuramic acid and anhydro-N-acetylmuramic acid-linked peptides. This is Beta-hexosaminidase from Haemophilus influenzae (strain PittEE).